A 1147-amino-acid polypeptide reads, in one-letter code: PDZ domain-containing protein 8 (1147 aa).

A helical transmembrane segment spans residues Gly2–Leu24. The region spanning Ala87–Pro293 is the SMP-LTD domain. Positions Thr365–Ala448 constitute a PDZ domain. Phosphoserine is present on residues Ser490, Ser515, and Ser532. The segment at Glu504–Glu673 is disordered. The segment covering Gln510–Ser524 has biased composition (polar residues). Residues Lys557 to Gln576 are compositionally biased toward polar residues. The span at Phe580–Pro596 shows a compositional bias: pro residues. Residues Lys833–Cys884 form a Phorbol-ester/DAG-type zinc finger. The interval Arg948–Ala990 is disordered. 2 positions are modified to phosphoserine: Ser960 and Ser973. The segment covering Cys978–Gly987 has biased composition (polar residues). A coiled-coil region spans residues Pro1021–Glu1056. The segment covering Gln1126 to Ser1137 has biased composition (polar residues). The interval Gln1126–Val1147 is disordered.

Interacts with MSN.

It localises to the endoplasmic reticulum membrane. Its function is as follows. Molecular tethering protein that connects endoplasmic reticulum and mitochondria membranes. PDZD8-dependent endoplasmic reticulum-mitochondria membrane tethering is essential for endoplasmic reticulum-mitochondria Ca(2+) transfer. In neurons, involved in the regulation of dendritic Ca(2+) dynamics by regulating mitochondrial Ca(2+) uptake in neurons. This is PDZ domain-containing protein 8 from Mus musculus (Mouse).